Reading from the N-terminus, the 357-residue chain is tRNA N6-adenosine threonylcarbamoyltransferase (357 aa).

The Fe cation site is built by His116 and His120. Substrate is bound by residues Leu139–Gly143, Asp172, Gly185, and Asn284. Asp312 serves as a coordination point for Fe cation.

It belongs to the KAE1 / TsaD family. The cofactor is Fe(2+).

Its subcellular location is the cytoplasm. It catalyses the reaction L-threonylcarbamoyladenylate + adenosine(37) in tRNA = N(6)-L-threonylcarbamoyladenosine(37) in tRNA + AMP + H(+). Functionally, required for the formation of a threonylcarbamoyl group on adenosine at position 37 (t(6)A37) in tRNAs that read codons beginning with adenine. Is involved in the transfer of the threonylcarbamoyl moiety of threonylcarbamoyl-AMP (TC-AMP) to the N6 group of A37, together with TsaE and TsaB. TsaD likely plays a direct catalytic role in this reaction. In Synechococcus sp. (strain CC9605), this protein is tRNA N6-adenosine threonylcarbamoyltransferase.